Reading from the N-terminus, the 279-residue chain is Putative pyruvate, phosphate dikinase regulatory protein (279 aa).

156 to 163 (GVSRTSKT) is an ADP binding site.

Belongs to the pyruvate, phosphate/water dikinase regulatory protein family. PDRP subfamily.

It carries out the reaction N(tele)-phospho-L-histidyl/L-threonyl-[pyruvate, phosphate dikinase] + ADP = N(tele)-phospho-L-histidyl/O-phospho-L-threonyl-[pyruvate, phosphate dikinase] + AMP + H(+). It catalyses the reaction N(tele)-phospho-L-histidyl/O-phospho-L-threonyl-[pyruvate, phosphate dikinase] + phosphate + H(+) = N(tele)-phospho-L-histidyl/L-threonyl-[pyruvate, phosphate dikinase] + diphosphate. Its function is as follows. Bifunctional serine/threonine kinase and phosphorylase involved in the regulation of the pyruvate, phosphate dikinase (PPDK) by catalyzing its phosphorylation/dephosphorylation. The protein is Putative pyruvate, phosphate dikinase regulatory protein of Maricaulis maris (strain MCS10) (Caulobacter maris).